A 393-amino-acid polypeptide reads, in one-letter code: Phosphopentomutase (393 aa).

Residues Asp-14, Asp-287, His-292, Asp-328, His-329, and His-340 each contribute to the Mn(2+) site.

The protein belongs to the phosphopentomutase family. Requires Mn(2+) as cofactor.

The protein localises to the cytoplasm. It catalyses the reaction 2-deoxy-alpha-D-ribose 1-phosphate = 2-deoxy-D-ribose 5-phosphate. The enzyme catalyses alpha-D-ribose 1-phosphate = D-ribose 5-phosphate. Its pathway is carbohydrate degradation; 2-deoxy-D-ribose 1-phosphate degradation; D-glyceraldehyde 3-phosphate and acetaldehyde from 2-deoxy-alpha-D-ribose 1-phosphate: step 1/2. Functionally, isomerase that catalyzes the conversion of deoxy-ribose 1-phosphate (dRib-1-P) and ribose 1-phosphate (Rib-1-P) to deoxy-ribose 5-phosphate (dRib-5-P) and ribose 5-phosphate (Rib-5-P), respectively. The chain is Phosphopentomutase from Geobacillus stearothermophilus (Bacillus stearothermophilus).